A 142-amino-acid chain; its full sequence is Large-conductance mechanosensitive channel (142 aa).

Helical transmembrane passes span 14-34 (VMDL…VTSV), 38-58 (LVMP…NYFL), and 82-102 (GSFI…FLLV).

It belongs to the MscL family. In terms of assembly, homopentamer.

It is found in the cell inner membrane. In terms of biological role, channel that opens in response to stretch forces in the membrane lipid bilayer. May participate in the regulation of osmotic pressure changes within the cell. This Sinorhizobium fredii (strain NBRC 101917 / NGR234) protein is Large-conductance mechanosensitive channel.